Consider the following 369-residue polypeptide: Putative F-box/kelch-repeat protein At4g39760 (369 aa).

In terms of domain architecture, F-box spans 14–60 (SLSFSSLPHEIVVSCLARVSGSYYPKLCLVSKQFRSIILSNEIYKAR). Kelch repeat units follow at residues 131–177 (ETYI…GQYP), 178–224 (NIYV…KMKM), and 228–274 (NVYV…KNCW).

In Arabidopsis thaliana (Mouse-ear cress), this protein is Putative F-box/kelch-repeat protein At4g39760.